The chain runs to 140 residues: PDZ domain-containing protein 11 (140 aa).

The region spanning 47–129 (TVVLKKPPGA…ITMRVRYFPY (83 aa)) is the PDZ domain.

The protein resides in the cytoplasm. This Gallus gallus (Chicken) protein is PDZ domain-containing protein 11 (PDZD11).